The sequence spans 341 residues: MKVSDFYFELPEELIAQYPLEKRDSSRLMVLDKKTGEIEHRKFHDILEYLNEGDTLVLNNTRVLPARLIGEKEETGGKIEFLLLKRIEGDKWECLAKPGRKAKVGTVFTFGEGKLKAIVREIGEEGNRIIEFKYDGIFEQVLDELGQMPLPPYIHEKLEDKERYQTVYSKEKGSAAAPTAGLHFTEELLKEIKDKGVNIAYLTLHVGLGTFRPVKVDDVNNHVMHSEYYHLDKENAELINKTKEAGKRVIAVGTTSSRTLETIGDENGRVREQSGWTDIFIYPGYKFKIVDNLITNFHLPESTLIMLVSALAGQDNIMNAYNTAVKEKYRFFSFGDSMFIK.

This sequence belongs to the QueA family. In terms of assembly, monomer.

It is found in the cytoplasm. The enzyme catalyses 7-aminomethyl-7-carbaguanosine(34) in tRNA + S-adenosyl-L-methionine = epoxyqueuosine(34) in tRNA + adenine + L-methionine + 2 H(+). The protein operates within tRNA modification; tRNA-queuosine biosynthesis. Functionally, transfers and isomerizes the ribose moiety from AdoMet to the 7-aminomethyl group of 7-deazaguanine (preQ1-tRNA) to give epoxyqueuosine (oQ-tRNA). The protein is S-adenosylmethionine:tRNA ribosyltransferase-isomerase of Clostridium perfringens (strain ATCC 13124 / DSM 756 / JCM 1290 / NCIMB 6125 / NCTC 8237 / Type A).